A 340-amino-acid polypeptide reads, in one-letter code: Phosphoribosylformylglycinamidine cyclo-ligase (340 aa).

It belongs to the AIR synthase family.

The protein resides in the cytoplasm. The enzyme catalyses 2-formamido-N(1)-(5-O-phospho-beta-D-ribosyl)acetamidine + ATP = 5-amino-1-(5-phospho-beta-D-ribosyl)imidazole + ADP + phosphate + H(+). The protein operates within purine metabolism; IMP biosynthesis via de novo pathway; 5-amino-1-(5-phospho-D-ribosyl)imidazole from N(2)-formyl-N(1)-(5-phospho-D-ribosyl)glycinamide: step 2/2. The polypeptide is Phosphoribosylformylglycinamidine cyclo-ligase (Streptococcus pyogenes serotype M1).